The following is a 99-amino-acid chain: Nucleoid-associated protein EbfC (99 aa).

This sequence belongs to the YbaB/EbfC family. As to quaternary structure, homodimer. Can form tetramers and octamers in solution.

The protein localises to the cytoplasm. It localises to the nucleoid. Its function is as follows. Binds to DNA and alters its conformation. May be involved in global regulation of gene expression. Binds specifically and non-specifically to DNA, preferentially to the 4 bp broken palindrome 5'-GTnAC-3'. Affects expression of a wide variety of genes, encoding both structural and metabolic proteins. The protein is Nucleoid-associated protein EbfC of Borreliella burgdorferi (strain ATCC 35210 / DSM 4680 / CIP 102532 / B31) (Borrelia burgdorferi).